A 542-amino-acid polypeptide reads, in one-letter code: MANNSPALTGNSQPQHQAAAAVVQQQQQCGGGGATKPAVSGKQGNVLPLWGNEKTMNLNPMILTNILSSPYFKVQLYELKTYHEVVDEIYFKVTHVEPWEKGSRKTAGQTGMCGGVRGVGTGGIVSTAFCLLYKLFTLKLTRKQVMGLITHTDSPYIRALGFMYIRYTQPPTDLWDWFESFLDDEEDLDVKAGGGCVMTIGEMLRSFLTKLEWFSTLFPRIPVPVQKNIDQQIKTRPRKIKKDGKEGVEEIDRHIERRRSRSPRRSLSPRRSPRRSRSRSHHRDGHGSSSFDRELEREKERQRLEREAKEREKERRRSRSLDRGLDRRRSRSRERHRSRSRSRDRKGDRRDRDREREKENERGRRRDRDYDKDRGNDRERDRERSRERSKEQRSRGEGEEKKHKEDKEDRRHRDDKKESKKKHSRSRSRERKHRSRSRSRNAGKRSRSRSKDKASKHKNESKEKSNKRSRSGSQGRTGSVEKRKREHSPSREKSRKRSRSQDRSHKRDHDSKDQSDRQDHQRSQSVEPESQEKEHKNKDETV.

Residues 1-12 are compositionally biased toward polar residues; the sequence is MANNSPALTGNS. The interval 1-24 is disordered; that stretch reads MANNSPALTGNSQPQHQAAAAVVQ. N-acetylalanine is present on Ala2. Ser5 carries the phosphoserine modification. The segment covering 13–24 has biased composition (low complexity); the sequence is QPQHQAAAAVVQ. Position 227 is an N6-acetyllysine (Lys227). Residues 232-542 form a disordered region; the sequence is QIKTRPRKIK…KEHKNKDETV (311 aa). The span at 243-255 shows a compositional bias: basic and acidic residues; the sequence is DGKEGVEEIDRHI. The span at 256–284 shows a compositional bias: basic residues; the sequence is ERRRSRSPRRSLSPRRSPRRSRSRSHHRD. Ser288, Ser290, Ser318, and Ser320 each carry phosphoserine. A compositionally biased stretch (basic and acidic residues) spans 291 to 327; that stretch reads FDRELEREKERQRLEREAKEREKERRRSRSLDRGLDR. Positions 292-323 form a coiled coil; it reads DRELEREKERQRLEREAKEREKERRRSRSLDR. Positions 328 to 344 are enriched in basic residues; it reads RRSRSRERHRSRSRSRD. Over residues 345-418 the composition is skewed to basic and acidic residues; sequence RKGDRRDRDR…DRRHRDDKKE (74 aa). Basic residues predominate over residues 419 to 448; that stretch reads SKKKHSRSRSRERKHRSRSRSRNAGKRSRS. Ser446 bears the Phosphoserine mark. Positions 449–466 are enriched in basic and acidic residues; the sequence is RSKDKASKHKNESKEKSN. Phosphoserine occurs at positions 471, 473, and 479. Basic and acidic residues-rich tracts occupy residues 479–492 and 499–522; these read SVEK…PSRE and RSQD…DHQR. Phosphoserine is present on residues Ser523, Ser525, and Ser530. Positions 530 to 542 are enriched in basic and acidic residues; it reads SQEKEHKNKDETV.

Belongs to the PRP38 family.

The protein resides in the nucleus. In terms of biological role, may be required for pre-mRNA splicing. In Rattus norvegicus (Rat), this protein is Pre-mRNA-splicing factor 38B (Prpf38b).